The primary structure comprises 60 residues: Defensin MGD-1 (60 aa).

4 disulfides stabilise this stretch: Cys-4–Cys-25, Cys-10–Cys-33, Cys-14–Cys-35, and Cys-21–Cys-38. Trp-28 is modified (3-hydroxytryptophan). Residue Cys-38 is modified to Cysteine amide. A propeptide spanning residues 39 to 60 (GGRREDVEDIFDIFDNEAADRF) is cleaved from the precursor.

Belongs to the invertebrate defensin family. Type 2 subfamily. Post-translationally, the hydroxylation of the Trp-28 is not important for the antibacterial activity. In terms of tissue distribution, abundantly expressed in hemocytes.

It localises to the secreted. Functionally, active against both Gram-positive and Gram-negative bacteria but is not cytotoxic towards human erythrocytes or protozoa. The chain is Defensin MGD-1 (FH3) from Mytilus galloprovincialis (Mediterranean mussel).